We begin with the raw amino-acid sequence, 553 residues long: Glucose-6-phosphate isomerase (553 aa).

The active-site Proton donor is the Glu-357. Active-site residues include His-388 and Lys-514. Positions 527 to 553 (ADSPAAQSDSSTDALVRRYRTERGRTA) are disordered. Basic and acidic residues predominate over residues 541-553 (LVRRYRTERGRTA).

This sequence belongs to the GPI family.

It is found in the cytoplasm. It catalyses the reaction alpha-D-glucose 6-phosphate = beta-D-fructose 6-phosphate. It participates in carbohydrate biosynthesis; gluconeogenesis. Its pathway is carbohydrate degradation; glycolysis; D-glyceraldehyde 3-phosphate and glycerone phosphate from D-glucose: step 2/4. Catalyzes the reversible isomerization of glucose-6-phosphate to fructose-6-phosphate. This is Glucose-6-phosphate isomerase from Mycolicibacterium vanbaalenii (strain DSM 7251 / JCM 13017 / BCRC 16820 / KCTC 9966 / NRRL B-24157 / PYR-1) (Mycobacterium vanbaalenii).